The following is a 214-amino-acid chain: Octanoyltransferase (214 aa).

Positions 36-214 (GRESEMVWLL…QQKFDTIFLQ (179 aa)) constitute a BPL/LPL catalytic domain. Residues 75 to 82 (RGGKYSYH), 147 to 149 (AFG), and 160 to 162 (GFS) contribute to the substrate site. The active-site Acyl-thioester intermediate is C178.

This sequence belongs to the LipB family.

Its subcellular location is the cytoplasm. The catalysed reaction is octanoyl-[ACP] + L-lysyl-[protein] = N(6)-octanoyl-L-lysyl-[protein] + holo-[ACP] + H(+). Its pathway is protein modification; protein lipoylation via endogenous pathway; protein N(6)-(lipoyl)lysine from octanoyl-[acyl-carrier-protein]: step 1/2. In terms of biological role, catalyzes the transfer of endogenously produced octanoic acid from octanoyl-acyl-carrier-protein onto the lipoyl domains of lipoate-dependent enzymes. Lipoyl-ACP can also act as a substrate although octanoyl-ACP is likely to be the physiological substrate. In Anaplasma marginale (strain Florida), this protein is Octanoyltransferase.